Consider the following 466-residue polypeptide: Reticulophagy regulator 3 (466 aa).

The segment at methionine 1–serine 28 is disordered. Alanine 2 bears the N-acetylalanine mark. Residues alanine 2 to tryptophan 80 lie on the Cytoplasmic side of the membrane. Threonine 10 is modified (phosphothreonine). Position 26 is a phosphoserine (serine 26). The helical transmembrane segment at phenylalanine 81–valine 101 threads the bilayer. Residues cysteine 102 to lysine 163 are Lumenal-facing. The helical transmembrane segment at glutamine 164–glycine 184 threads the bilayer. Over arginine 185–tyrosine 186 the chain is Cytoplasmic. The chain crosses the membrane as a helical span at residues valine 187–valine 207. At tyrosine 208–glutamate 381 the chain is on the lumenal side. Residues serine 258 and serine 260 each carry the phosphoserine modification. Threonine 283 carries the phosphothreonine modification. Residues aspartate 284–arginine 374 are disordered. 4 positions are modified to phosphoserine: serine 285, serine 288, serine 293, and serine 303. Residues cysteine 294 to threonine 310 show a composition bias toward polar residues. Phosphothreonine occurs at positions 307 and 310. Residues serine 313, serine 320, and serine 360 each carry the phosphoserine modification. The span at leucine 316–proline 331 shows a compositional bias: basic and acidic residues. The chain crosses the membrane as a helical span at residues leucine 382–serine 402. Over glutamine 403–histidine 466 the chain is Cytoplasmic. Residues glycine 412 to histidine 466 are disordered. The span at leucine 438–aspartate 451 shows a compositional bias: acidic residues. The residue at position 440 (threonine 440) is a Phosphothreonine. The LIR motif signature appears at aspartate 445–leucine 450. The segment covering serine 453 to histidine 466 has biased composition (polar residues).

It belongs to the RETREG family. As to quaternary structure, interacts with ATG8 family modifier proteins MAP1LC3A, MAP1LC3B, MAP1LC3C, GABARAP, GABARAPL1 and GABARAPL2. Interacts with CANX. Interacts with RTN4 isoform B.

It is found in the endoplasmic reticulum membrane. Endoplasmic reticulum (ER)-anchored autophagy regulator which exists in an inactive state under basal conditions but is activated following cellular stress. When activated, induces ER fragmentation and mediates ER delivery into lysosomes through sequestration into autophagosomes via interaction with ATG8 family proteins. Promotes ER membrane curvature and ER tubulation required for subsequent ER fragmentation and engulfment into autophagosomes. Required for collagen quality control in a LIR motif-dependent manner. Mediates NRF1-enhanced neurite outgrowth. The polypeptide is Reticulophagy regulator 3 (Homo sapiens (Human)).